A 378-amino-acid chain; its full sequence is Diacetylchitobiose uptake system ATP-binding protein MsiK (378 aa).

Residues 4–236 enclose the ABC transporter domain; that stretch reads VTFDKATRVY…PANLFVAGFI (233 aa). An ATP-binding site is contributed by 38 to 45; sequence GPSGCGKS.

Belongs to the ABC transporter superfamily. In terms of assembly, the DasABC-MsiK complex is composed of two ATP-binding proteins (MsiK), two transmembrane proteins (DasB and DasC) and a solute-binding protein (DasA). The NgcEFG-MsiK complex is composed of two ATP-binding proteins (MsiK), two transmembrane proteins (NgcF and NgcG) and a solute-binding protein (NgcE).

Its subcellular location is the cell membrane. In terms of biological role, part of the ABC transporter complexes DasABC-MsiK and NgcEFG-MsiK involved in N,N'-diacetylchitobiose ((GlcNAc)2) uptake. Responsible for energy coupling to the transport system. This Streptomyces coelicolor (strain ATCC BAA-471 / A3(2) / M145) protein is Diacetylchitobiose uptake system ATP-binding protein MsiK.